Reading from the N-terminus, the 95-residue chain is uncharacterized protein (95 aa).

This is an uncharacterized protein from Bacillus anthracis.